The sequence spans 288 residues: Nucleotide-binding protein Mlg_2233 (288 aa).

11-18 (GLSGSGKS) provides a ligand contact to ATP. 63–66 (DARN) is a GTP binding site.

Belongs to the RapZ-like family.

Functionally, displays ATPase and GTPase activities. The sequence is that of Nucleotide-binding protein Mlg_2233 from Alkalilimnicola ehrlichii (strain ATCC BAA-1101 / DSM 17681 / MLHE-1).